The sequence spans 117 residues: Large ribosomal subunit protein bL20 (117 aa).

Belongs to the bacterial ribosomal protein bL20 family.

Functionally, binds directly to 23S ribosomal RNA and is necessary for the in vitro assembly process of the 50S ribosomal subunit. It is not involved in the protein synthesizing functions of that subunit. This is Large ribosomal subunit protein bL20 from Solidesulfovibrio magneticus (strain ATCC 700980 / DSM 13731 / RS-1) (Desulfovibrio magneticus).